A 127-amino-acid polypeptide reads, in one-letter code: Large ribosomal subunit protein eL8 (127 aa).

This sequence belongs to the eukaryotic ribosomal protein eL8 family. Part of the 50S ribosomal subunit. Component of box C/D small ribonucleoprotein (sRNP) particles that contain rpl7ae, FlpA and nop5, plus a guide RNA. These sRNP particles form homodimers, giving rise to an asymmetric holoenzyme. Probably part of the RNase P complex.

The protein resides in the cytoplasm. Multifunctional RNA-binding protein that recognizes the K-turn motif in ribosomal RNA, the RNA component of RNase P, box H/ACA, box C/D and box C'/D' sRNAs. This Saccharolobus solfataricus (strain ATCC 35092 / DSM 1617 / JCM 11322 / P2) (Sulfolobus solfataricus) protein is Large ribosomal subunit protein eL8.